The chain runs to 309 residues: Glutamyl-Q tRNA(Asp) synthetase (309 aa).

L-glutamate contacts are provided by residues 8 to 12 (RFSPS) and Glu-44. Positions 11–21 (PSPTGPLHAGS) match the 'HIGH' region motif. Residues Cys-100, Cys-102, Tyr-126, and Cys-130 each contribute to the Zn(2+) site. 2 residues coordinate L-glutamate: Tyr-205 and Arg-223. The 'KMSKS' region signature appears at 261–265 (KLSKQ). Position 264 (Lys-264) interacts with ATP.

The protein belongs to the class-I aminoacyl-tRNA synthetase family. GluQ subfamily. Requires Zn(2+) as cofactor.

In terms of biological role, catalyzes the tRNA-independent activation of glutamate in presence of ATP and the subsequent transfer of glutamate onto a tRNA(Asp). Glutamate is transferred on the 2-amino-5-(4,5-dihydroxy-2-cyclopenten-1-yl) moiety of the queuosine in the wobble position of the QUC anticodon. This is Glutamyl-Q tRNA(Asp) synthetase from Albidiferax ferrireducens (strain ATCC BAA-621 / DSM 15236 / T118) (Rhodoferax ferrireducens).